A 693-amino-acid chain; its full sequence is Polyribonucleotide nucleotidyltransferase (693 aa).

Positions 486 and 492 each coordinate Mg(2+). The 60-residue stretch at 553–612 (PRFTTLKIHPDKIRDVIGKGGATIRALTEETGTSIDISDDGTVKIASVDKAAGDEARRRI) folds into the KH domain. One can recognise an S1 motif domain in the interval 622–690 (GRIYEGRVVK…KQGRIRLSMK (69 aa)).

The protein belongs to the polyribonucleotide nucleotidyltransferase family. As to quaternary structure, component of the RNA degradosome, which is a multiprotein complex involved in RNA processing and mRNA degradation. Mg(2+) is required as a cofactor.

The protein localises to the cytoplasm. The enzyme catalyses RNA(n+1) + phosphate = RNA(n) + a ribonucleoside 5'-diphosphate. Functionally, involved in mRNA degradation. Catalyzes the phosphorolysis of single-stranded polyribonucleotides processively in the 3'- to 5'-direction. This chain is Polyribonucleotide nucleotidyltransferase, found in Thioalkalivibrio sulfidiphilus (strain HL-EbGR7).